We begin with the raw amino-acid sequence, 337 residues long: Adenylosuccinate synthetase (337 aa).

GTP is bound by residues 12-18 and 42-44; these read GDEGKGK and GHT. Residue aspartate 13 is the Proton acceptor of the active site. Mg(2+)-binding residues include aspartate 13 and glycine 42. Residues 13 to 16, 40 to 43, threonine 124, arginine 138, glutamine 176, threonine 191, and arginine 253 each bind IMP; these read DEGK and NAGH. Histidine 43 serves as the catalytic Proton donor. 249–255 provides a ligand contact to substrate; sequence TVTGRRR. GTP contacts are provided by residues arginine 255, 281-283, and 321-323; these read GVD and STG.

The protein belongs to the adenylosuccinate synthetase family. As to quaternary structure, homodimer. Mg(2+) is required as a cofactor.

The protein resides in the cytoplasm. The enzyme catalyses IMP + L-aspartate + GTP = N(6)-(1,2-dicarboxyethyl)-AMP + GDP + phosphate + 2 H(+). It participates in purine metabolism; AMP biosynthesis via de novo pathway; AMP from IMP: step 1/2. Plays an important role in the de novo pathway of purine nucleotide biosynthesis. Catalyzes the first committed step in the biosynthesis of AMP from IMP. This chain is Adenylosuccinate synthetase, found in Archaeoglobus fulgidus (strain ATCC 49558 / DSM 4304 / JCM 9628 / NBRC 100126 / VC-16).